The sequence spans 351 residues: Phosphoribosylformylglycinamidine cyclo-ligase (351 aa).

This sequence belongs to the AIR synthase family.

The protein resides in the cytoplasm. The enzyme catalyses 2-formamido-N(1)-(5-O-phospho-beta-D-ribosyl)acetamidine + ATP = 5-amino-1-(5-phospho-beta-D-ribosyl)imidazole + ADP + phosphate + H(+). The protein operates within purine metabolism; IMP biosynthesis via de novo pathway; 5-amino-1-(5-phospho-D-ribosyl)imidazole from N(2)-formyl-N(1)-(5-phospho-D-ribosyl)glycinamide: step 2/2. This chain is Phosphoribosylformylglycinamidine cyclo-ligase, found in Burkholderia lata (strain ATCC 17760 / DSM 23089 / LMG 22485 / NCIMB 9086 / R18194 / 383).